Consider the following 298-residue polypeptide: tRNA dimethylallyltransferase (298 aa).

Residue 10–17 (GPTASGKT) coordinates ATP. 12–17 (TASGKT) is a binding site for substrate. The interval 35–38 (DSMC) is interaction with substrate tRNA.

The protein belongs to the IPP transferase family. In terms of assembly, monomer. Mg(2+) serves as cofactor.

The enzyme catalyses adenosine(37) in tRNA + dimethylallyl diphosphate = N(6)-dimethylallyladenosine(37) in tRNA + diphosphate. In terms of biological role, catalyzes the transfer of a dimethylallyl group onto the adenine at position 37 in tRNAs that read codons beginning with uridine, leading to the formation of N6-(dimethylallyl)adenosine (i(6)A). The chain is tRNA dimethylallyltransferase from Hydrogenobaculum sp. (strain Y04AAS1).